We begin with the raw amino-acid sequence, 127 residues long: Small ribosomal subunit protein uS11 (127 aa).

Belongs to the universal ribosomal protein uS11 family. As to quaternary structure, part of the 30S ribosomal subunit. Interacts with proteins S7 and S18. Binds to IF-3.

In terms of biological role, located on the platform of the 30S subunit, it bridges several disparate RNA helices of the 16S rRNA. Forms part of the Shine-Dalgarno cleft in the 70S ribosome. In Chlorobium chlorochromatii (strain CaD3), this protein is Small ribosomal subunit protein uS11.